The following is a 65-amino-acid chain: Potassium channel toxin kappa-KTx 2.6 (65 aa).

Residues 1 to 27 (MKTSKMICAFLLVLVVGTFNDISGAYG) form the signal peptide. A propeptide spanning residues 28–39 (EYVEDQHSFKIE) is cleaved from the precursor. Disulfide bonds link Cys45–Cys63 and Cys49–Cys59.

Belongs to the short scorpion toxin superfamily. Potassium channel inhibitor kappa-KTx family. Kappa-KTx 2 subfamily. As to expression, expressed by the venom gland.

The protein resides in the secreted. Functionally, potassium channel inhibitor (Kv). The sequence is that of Potassium channel toxin kappa-KTx 2.6 from Opisthacanthus cayaporum (South American scorpion).